The primary structure comprises 190 residues: HTH-type transcriptional repressor AcnR (190 aa).

In terms of domain architecture, HTH tetR-type spans 10-70 (SMRRQEILEG…ALAREDAARM (61 aa)). The H-T-H motif DNA-binding region spans 33-52 (TVRRLEETVGKSRGAIFHHF). Citrate-binding positions include 79–80 (LV), R130, and N134. E181 is a Mg(2+) binding site. R185 is a citrate binding site.

As to quaternary structure, homodimer.

AcnR negatively controls the expression of the aconitase gene acn. The sequence is that of HTH-type transcriptional repressor AcnR from Corynebacterium diphtheriae (strain ATCC 700971 / NCTC 13129 / Biotype gravis).